A 337-amino-acid chain; its full sequence is D-alanine--D-alanine ligase (337 aa).

Residues 124-330 (KMWFSALGIP…FTEYLSLVIN (207 aa)) enclose the ATP-grasp domain. 154–209 (ALANWGSIFIKAASQGSSVGCYKVDDSSKVAQVLKDAFGYAPYVVVEKTIKARELE) serves as a coordination point for ATP. Mg(2+) is bound by residues Asp284, Glu297, and Asn299.

It belongs to the D-alanine--D-alanine ligase family. The cofactor is Mg(2+). Requires Mn(2+) as cofactor.

Its subcellular location is the cytoplasm. It catalyses the reaction 2 D-alanine + ATP = D-alanyl-D-alanine + ADP + phosphate + H(+). It participates in cell wall biogenesis; peptidoglycan biosynthesis. Functionally, cell wall formation. The polypeptide is D-alanine--D-alanine ligase (Shewanella sp. (strain W3-18-1)).